We begin with the raw amino-acid sequence, 428 residues long: Cell number regulator 13 (428 aa).

A compositionally biased stretch (basic and acidic residues) spans 233-280 (PEKETNVKAPEKKGSNYSESKGETAKSFDDDDDYPKKQNGDYPKKQKD). Residues 233–290 (PEKETNVKAPEKKGSNYSESKGETAKSFDDDDDYPKKQNGDYPKKQKDTCSTQRCSSQ) form a disordered region. Positions 281-290 (TCSTQRCSSQ) are enriched in polar residues. The chain crosses the membrane as a helical span at residues 354-370 (IMAYSLILSCCCYTCCV).

Expressed in roots, coleoptiles, leaves, stalks, apical meristems, immature ears, embryos, endosperm, pericarp, silks and tassel spikelets. Not detected in pollen.

Its subcellular location is the membrane. In Zea mays (Maize), this protein is Cell number regulator 13 (CNR13).